Here is a 213-residue protein sequence, read N- to C-terminus: Amelogenin, X isoform (213 aa).

The first 16 residues, 1-16 (MGTWILFACLLGAAFS), serve as a signal peptide directing secretion. Ser32 is subject to Phosphoserine. 2 stretches are compositionally biased toward low complexity: residues 96–105 (VPQQPMMPVP) and 114–160 (QHHQ…QPLQ). A disordered region spans residues 96 to 213 (VPQQPMMPVP…TDKTKREEVD (118 aa)). Residues 161–194 (PLQPQPPVHPIQPLPPQPPLPPIFPMQPLPPMLP) are compositionally biased toward pro residues.

It belongs to the amelogenin family. Interacts with KRT5. Post-translationally, phosphorylated by FAM20C in vitro.

The protein resides in the secreted. It localises to the extracellular space. It is found in the extracellular matrix. Its function is as follows. Plays a role in the biomineralization of teeth. Seems to regulate the formation of crystallites during the secretory stage of tooth enamel development. Thought to play a major role in the structural organization and mineralization of developing enamel. This chain is Amelogenin, X isoform (AMELX), found in Bos taurus (Bovine).